A 203-amino-acid polypeptide reads, in one-letter code: GTP-binding protein rho4 (203 aa).

21-28 (GDGGCGKT) lines the GTP pocket. The short motif at 43 to 51 (YVPTVFENY) is the Effector region element. Residue 70 to 74 (DTAGQ) participates in GTP binding. At C200 the chain carries Cysteine methyl ester. C200 carries S-geranylgeranyl cysteine lipidation. The propeptide at 201–203 (VIL) is removed in mature form.

Belongs to the small GTPase superfamily. Rho family.

It is found in the membrane. Functionally, required for cell separation. Involved in the regulation of the septum degradation during cytokinesis and in the organization of F-actin patches and cytoplasmic microtubules. The polypeptide is GTP-binding protein rho4 (rho4) (Schizosaccharomyces pombe (strain 972 / ATCC 24843) (Fission yeast)).